Consider the following 410-residue polypeptide: Peptidase T (410 aa).

Position 79 (histidine 79) interacts with Zn(2+). Aspartate 81 is an active-site residue. Position 142 (aspartate 142) interacts with Zn(2+). Glutamate 176 serves as the catalytic Proton acceptor. Residues glutamate 177, aspartate 199, and histidine 381 each coordinate Zn(2+).

It belongs to the peptidase M20B family. Requires Zn(2+) as cofactor.

It localises to the cytoplasm. It carries out the reaction Release of the N-terminal residue from a tripeptide.. Cleaves the N-terminal amino acid of tripeptides. This chain is Peptidase T, found in Listeria welshimeri serovar 6b (strain ATCC 35897 / DSM 20650 / CCUG 15529 / CIP 8149 / NCTC 11857 / SLCC 5334 / V8).